A 192-amino-acid polypeptide reads, in one-letter code: MEATRRSRLSLSRRRPPLGVRPRSNTAGSLPDGGECAKLWTELLRTASADLNVDGELPPLPAFPDQEPRRSPERPPPETFTVGTETFFWTPFPAPSPGRGGNSGGSDLVLSAVRGRTGSPQQYAAPELRGTPSAEEQPSEEQPSQRQSSVDGAMTLQSCPMCQVDFAPGLAQLDIDGHLAQCLADSTDDIEW.

Residues 1 to 16 (MEATRRSRLSLSRRRP) are compositionally biased toward basic residues. Disordered regions lie at residues 1–34 (MEAT…PDGG) and 51–151 (LNVD…SSVD). Basic and acidic residues predominate over residues 66–76 (QEPRRSPERPP). Phosphoserine is present on residues serine 119 and serine 149. Positions 132 to 149 (PSAEEQPSEEQPSQRQSS) are enriched in low complexity. The UBZ2-type zinc-finger motif lies at 156–192 (LQSCPMCQVDFAPGLAQLDIDGHLAQCLADSTDDIEW). Zn(2+) contacts are provided by cysteine 159, cysteine 162, histidine 178, and cysteine 182.

In terms of assembly, component of the Fanconi anemia (FA) complex. Interacts with FANCA; interaction is direct. Interacts with REV1.

The protein resides in the nucleus. The protein localises to the chromosome. In terms of biological role, component of the Fanconi anemia (FA) complex required to recruit the FA complex to DNA interstrand cross-links (ICLs) and promote ICLs repair. Following DNA damage recognizes and binds 'Lys-63'-linked ubiquitin generated by RNF8 at ICLs and recruits other components of the FA complex. Promotes translesion synthesis via interaction with REV1. This Bos taurus (Bovine) protein is Fanconi anemia core complex-associated protein 20.